Here is a 542-residue protein sequence, read N- to C-terminus: NXPE family member 4 (542 aa).

Positions 1–26 (MKMMASRKSLWVLLFIVIFWISFTVF) are cleaved as a signal peptide. Residues Asn91, Asn92, Asn159, and Asn223 are each glycosylated (N-linked (GlcNAc...) asparagine).

The protein belongs to the NXPE family.

The protein localises to the secreted. The polypeptide is NXPE family member 4 (Nxpe4) (Rattus norvegicus (Rat)).